Reading from the N-terminus, the 391-residue chain is Phosphoglycerate kinase (391 aa).

Substrate-binding positions include 21–23 (DLN), R36, 59–62 (HLGR), R114, and R147. ATP contacts are provided by residues K198, E315, and 344–347 (GGDT).

Belongs to the phosphoglycerate kinase family. As to quaternary structure, monomer.

The protein resides in the cytoplasm. It carries out the reaction (2R)-3-phosphoglycerate + ATP = (2R)-3-phospho-glyceroyl phosphate + ADP. It participates in carbohydrate degradation; glycolysis; pyruvate from D-glyceraldehyde 3-phosphate: step 2/5. In Haemophilus ducreyi (strain 35000HP / ATCC 700724), this protein is Phosphoglycerate kinase.